Reading from the N-terminus, the 274-residue chain is Protein CURLY FLAG LEAF 1 (274 aa).

The segment at 17 to 44 (SLNGGGGGGGGRRRGRRAAAAEGSDDSE) is disordered. The EAR motif lies at 47–52 (TVELNS). In terms of domain architecture, WW spans 54 to 88 (VALPYHWEQCLDIRTGQVYYINWEDGTRTTIDPRS). 2 disordered regions span residues 83-133 (TIDP…SGYT) and 175-216 (GRDG…SPTD). Composition is skewed to low complexity over residues 87–106 (RSSSAYSPSPASRSASSSSR), 121–133 (AAAASTTTSSGYT), and 184–207 (SSSSSSSSSSSSSASSSRGSAVSS).

In terms of assembly, binds to HDG1.

Functionally, negatively regulates the cuticle development probably by interacting with the HD-ZIP IV transcription factor HDG1. This Oryza sativa subsp. japonica (Rice) protein is Protein CURLY FLAG LEAF 1.